Here is a 297-residue protein sequence, read N- to C-terminus: Vacuolar protein sorting-associated protein 26C (297 aa).

It belongs to the VPS26 family. As to quaternary structure, component of the commander complex that is essential for endosomal recycling of transmembrane cargos; the commander complex is composed of the CCC subcomplex and the retriever subcomplex. Component of the heterotrimeric retriever complex consisting of VPS26C, VPS29 and VPS35L; within the complex interacts with VPS35L. Interacts with SNX17 (via C-terminus); the interaction is direct and associates SNX17 with the retriever complex. Interacts with SNX31; the interaction is direct. As to expression, ubiquitously expressed.

Its subcellular location is the endosome. Component of the commander complex that is essential for endosomal recycling of transmembrane cargos; the commander complex is composed of the CCC subcomplex and the retriever subcomplex. Component of the retriever complex, which is a heterotrimeric complex related to retromer cargo-selective complex (CSC) and essential for retromer-independent retrieval and recycling of numerous cargos such as integrin alpha-5/beta-1 (ITGA5:ITGB1). The recruitment of the retriever complex to the endosomal membrane involves CCC and WASH complexes. In the endosomes, drives the retriever and recycling of NxxY-motif-containing cargo proteins by coupling to SNX17, a cargo essential for the homeostatic maintenance of numerous cell surface proteins associated with processes that include cell migration, cell adhesion, nutrient supply and cell signaling. In terms of biological role, (Microbial infection) The heterotrimeric retriever complex, in collaboration with the CCC complex, mediates the exit of human papillomavirus to the cell surface. The sequence is that of Vacuolar protein sorting-associated protein 26C from Homo sapiens (Human).